Reading from the N-terminus, the 340-residue chain is NAD kinase (340 aa).

The active-site Proton acceptor is D66. NAD(+) contacts are provided by residues 66–67, R71, 141–142, K152, D171, 182–187, and A206; these read DG, ND, and TAYAFS. The tract at residues 321 to 340 is disordered; the sequence is AGVAGTEPDKPGERDGKAGS. Residues 327-340 are compositionally biased toward basic and acidic residues; it reads EPDKPGERDGKAGS.

The protein belongs to the NAD kinase family. It depends on a divalent metal cation as a cofactor.

The protein resides in the cytoplasm. It carries out the reaction NAD(+) + ATP = ADP + NADP(+) + H(+). Its function is as follows. Involved in the regulation of the intracellular balance of NAD and NADP, and is a key enzyme in the biosynthesis of NADP. Catalyzes specifically the phosphorylation on 2'-hydroxyl of the adenosine moiety of NAD to yield NADP. The protein is NAD kinase of Bifidobacterium longum (strain DJO10A).